The chain runs to 87 residues: DNA polymerase epsilon subunit C (87 aa).

As to quaternary structure, DNA polymerase epsilon is a heterotetramer consisting of cdc20/Pol2, dpb2, dpb3, and dpb4. Also forms a heterodimer consisting dpb3 and dpb4. Interacts directly with cdc20/pol2 and dpb4.

It localises to the nucleus. Functionally, as accessory component of the DNA polymerase epsilon (DNA polymerase II) participates in chromosomal DNA replication. It is required during synthesis of the leading and lagging DNA strands at the replication fork and binds at/or near replication origins and moves along DNA with the replication fork. It has 3'-5' proofreading exonuclease activity that correct errors arising during DNA replication. It is also involved in DNA synthesis during DNA repair. The dpb3-dpb4 dimer associates with histone deacetylases, chromatin remodelers, and histones and plays a crucial role in the inheritance of histone hypoacetylation and H3K9 methylation in heterochromatin. The dpb3-dpb4 dimer is also required for the recruitment of sir2 to heterochromatin. This chain is DNA polymerase epsilon subunit C, found in Schizosaccharomyces pombe (strain 972 / ATCC 24843) (Fission yeast).